Consider the following 77-residue polypeptide: Small ribosomal subunit protein bS18 (77 aa).

The protein belongs to the bacterial ribosomal protein bS18 family. As to quaternary structure, part of the 30S ribosomal subunit. Forms a tight heterodimer with protein bS6.

Its function is as follows. Binds as a heterodimer with protein bS6 to the central domain of the 16S rRNA, where it helps stabilize the platform of the 30S subunit. This chain is Small ribosomal subunit protein bS18, found in Shouchella clausii (strain KSM-K16) (Alkalihalobacillus clausii).